A 392-amino-acid polypeptide reads, in one-letter code: Flavohemoprotein (392 aa).

The region spanning 1 to 139 (MLNAEQRAII…LADILIGAEE (139 aa)) is the Globin domain. Histidine 85 contributes to the heme b binding site. Active-site charge relay system residues include tyrosine 95 and glutamate 138. The tract at residues 150–392 (GGWRGTREFR…EFFGPAAALE (243 aa)) is reductase. The FAD-binding FR-type domain maps to 153–256 (RGTREFRLVR…FPPAGDFTLA (104 aa)). FAD contacts are provided by residues tyrosine 191 and 205–208 (RNYS). 268–273 (GVGITP) provides a ligand contact to NADP(+). Residue 384–387 (FFGP) coordinates FAD.

It belongs to the globin family. Two-domain flavohemoproteins subfamily. In the C-terminal section; belongs to the flavoprotein pyridine nucleotide cytochrome reductase family. Heme b serves as cofactor. FAD is required as a cofactor.

It carries out the reaction 2 nitric oxide + NADPH + 2 O2 = 2 nitrate + NADP(+) + H(+). The enzyme catalyses 2 nitric oxide + NADH + 2 O2 = 2 nitrate + NAD(+) + H(+). In terms of biological role, is involved in NO detoxification in an aerobic process, termed nitric oxide dioxygenase (NOD) reaction that utilizes O(2) and NAD(P)H to convert NO to nitrate, which protects the bacterium from various noxious nitrogen compounds. Therefore, plays a central role in the inducible response to nitrosative stress. In Pseudomonas putida (strain ATCC 47054 / DSM 6125 / CFBP 8728 / NCIMB 11950 / KT2440), this protein is Flavohemoprotein.